The sequence spans 352 residues: Replication factor C subunit 5 (352 aa).

Belongs to the activator 1 small subunits family. Heteropentamer of subunits rfc1, rfc2, rfc3, rfc4 and rfc5 that forms a complex with PCNA in the presence of ATP.

The protein localises to the nucleus. In terms of biological role, the elongation of primed DNA templates by DNA polymerase delta and epsilon requires the action of the accessory proteins proliferating cell nuclear antigen (PCNA) and activator 1. The sequence is that of Replication factor C subunit 5 from Neurospora crassa (strain ATCC 24698 / 74-OR23-1A / CBS 708.71 / DSM 1257 / FGSC 987).